Here is a 202-residue protein sequence, read N- to C-terminus: Matrix protein (202 aa).

A PPXY motif motif is present at residues 35–38 (PPEY). The essential for glycoprotein binding stretch occupies residues 115–151 (KIRRTLVFQWAESRGPLDGEELEYSQEITWDDDSEFI).

It belongs to the lyssavirus matrix protein family. In terms of assembly, homomultimer. Interacts with nucleoprotein and with the cytoplasmic domain of glycoprotein.

It is found in the virion membrane. It localises to the host endomembrane system. Plays a major role in assembly and budding of virion. Completely covers the ribonucleoprotein coil and keep it in condensed bullet-shaped form. Inhibits viral transcription and stimulates replication. Plays a major role in early induction of TRAIL-mediated apoptosis in infected neurons. In Aravan virus (ARAV), this protein is Matrix protein (M).